A 374-amino-acid chain; its full sequence is Pectate lyase 3 (374 aa).

The signal sequence occupies residues 1 to 22 (MKYLLPSTAAGLLLLAAQPTMA). Cys93 and Cys176 are disulfide-bonded. Residues Asp150, Asp152, Glu187, and Asp191 each coordinate Ca(2+). Arg239 is an active-site residue. A disulfide bridge links Cys350 with Cys373.

Belongs to the polysaccharide lyase 1 family. PLADES subfamily. Ca(2+) is required as a cofactor.

The protein resides in the secreted. It catalyses the reaction Eliminative cleavage of (1-&gt;4)-alpha-D-galacturonan to give oligosaccharides with 4-deoxy-alpha-D-galact-4-enuronosyl groups at their non-reducing ends.. It participates in glycan metabolism; pectin degradation; 2-dehydro-3-deoxy-D-gluconate from pectin: step 2/5. In terms of biological role, involved in maceration and soft-rotting of plant tissue. The chain is Pectate lyase 3 (pel3) from Pectobacterium atrosepticum (strain SCRI 1043 / ATCC BAA-672) (Erwinia carotovora subsp. atroseptica).